Here is a 236-residue protein sequence, read N- to C-terminus: Ribonuclease 3 (236 aa).

The RNase III domain occupies 7-136 (KSYILKKFNI…FIGALYLDQG (130 aa)). Mg(2+) is bound at residue Glu49. Residue Asp53 is part of the active site. Asp122 and Glu125 together coordinate Mg(2+). The active site involves Glu125. The region spanning 162–232 (DFKSRLQERL…ARAALKILED (71 aa)) is the DRBM domain.

This sequence belongs to the ribonuclease III family. In terms of assembly, homodimer. Mg(2+) serves as cofactor.

It localises to the cytoplasm. The catalysed reaction is Endonucleolytic cleavage to 5'-phosphomonoester.. Its function is as follows. Digests double-stranded RNA. Involved in the processing of primary rRNA transcript to yield the immediate precursors to the large and small rRNAs (23S and 16S). Processes some mRNAs, and tRNAs when they are encoded in the rRNA operon. Processes pre-crRNA and tracrRNA of type II CRISPR loci if present in the organism. The chain is Ribonuclease 3 from Leuconostoc mesenteroides subsp. mesenteroides (strain ATCC 8293 / DSM 20343 / BCRC 11652 / CCM 1803 / JCM 6124 / NCDO 523 / NBRC 100496 / NCIMB 8023 / NCTC 12954 / NRRL B-1118 / 37Y).